We begin with the raw amino-acid sequence, 405 residues long: L-carnitine CoA-transferase (405 aa).

Residues Lys-97 and Arg-104 each contribute to the CoA site. Asp-169 (nucleophile) is an active-site residue.

It belongs to the CoA-transferase III family. CaiB subfamily. In terms of assembly, homodimer.

Its subcellular location is the cytoplasm. It catalyses the reaction crotonobetainyl-CoA + (R)-carnitine = crotonobetaine + (R)-carnitinyl-CoA. The catalysed reaction is 4-(trimethylamino)butanoyl-CoA + (R)-carnitine = (R)-carnitinyl-CoA + 4-(trimethylamino)butanoate. It functions in the pathway amine and polyamine metabolism; carnitine metabolism. Functionally, catalyzes the reversible transfer of the CoA moiety from gamma-butyrobetainyl-CoA to L-carnitine to generate L-carnitinyl-CoA and gamma-butyrobetaine. Is also able to catalyze the reversible transfer of the CoA moiety from gamma-butyrobetainyl-CoA or L-carnitinyl-CoA to crotonobetaine to generate crotonobetainyl-CoA. This is L-carnitine CoA-transferase (caiB) from Escherichia coli O157:H7.